A 154-amino-acid polypeptide reads, in one-letter code: Spermatogenesis-associated protein 19, mitochondrial (154 aa).

Residues 1 to 24 (MIITTWIVYILARKGAGLPFPPKV) constitute a mitochondrion transit peptide. 2 positions are modified to phosphoserine: serine 26 and serine 116.

It is found in the mitochondrion outer membrane. The protein localises to the mitochondrion. It localises to the cell projection. Its subcellular location is the cilium. The protein resides in the flagellum. Its function is as follows. Essential for sperm motility and male fertility. Plays an important role in sperm motility by regulating the organization and function of the mitochondria and is also required for correct sperm midpiece assembly. The protein is Spermatogenesis-associated protein 19, mitochondrial (SPATA19) of Bos taurus (Bovine).